Reading from the N-terminus, the 208-residue chain is MSTNGSIAAEARTARMERSTSESSVLVEINLDGTGVSDISTSVPFYDHMLTALSKHSLIDMTVKATGDIHIDVHHTVEDVAITFGEVLRTALGNKAGIRRFGEATVPLDEALAHAVVDVSGRPYLVHGGEPAGQEYHLIGGHFTGSLTRHVFEAITLHAGICLHMNVIAGRDPHHIVEAQFKAFARALRAAVEPDPRVEGIPSTKGAL.

It belongs to the imidazoleglycerol-phosphate dehydratase family.

The protein localises to the cytoplasm. It catalyses the reaction D-erythro-1-(imidazol-4-yl)glycerol 3-phosphate = 3-(imidazol-4-yl)-2-oxopropyl phosphate + H2O. It participates in amino-acid biosynthesis; L-histidine biosynthesis; L-histidine from 5-phospho-alpha-D-ribose 1-diphosphate: step 6/9. This is Imidazoleglycerol-phosphate dehydratase from Arthrobacter sp. (strain FB24).